The chain runs to 318 residues: Beta-ketoacyl-[acyl-carrier-protein] synthase III (318 aa).

Residues Cys-113 and His-245 contribute to the active site. The interval 246 to 250 (QANIR) is ACP-binding. The active site involves Asn-275.

Belongs to the thiolase-like superfamily. FabH family. As to quaternary structure, homodimer.

The protein resides in the cytoplasm. The enzyme catalyses malonyl-[ACP] + acetyl-CoA + H(+) = 3-oxobutanoyl-[ACP] + CO2 + CoA. It functions in the pathway lipid metabolism; fatty acid biosynthesis. Its function is as follows. Catalyzes the condensation reaction of fatty acid synthesis by the addition to an acyl acceptor of two carbons from malonyl-ACP. Catalyzes the first condensation reaction which initiates fatty acid synthesis and may therefore play a role in governing the total rate of fatty acid production. Possesses both acetoacetyl-ACP synthase and acetyl transacylase activities. Its substrate specificity determines the biosynthesis of branched-chain and/or straight-chain of fatty acids. This Wolbachia pipientis subsp. Culex pipiens (strain wPip) protein is Beta-ketoacyl-[acyl-carrier-protein] synthase III.